Here is a 250-residue protein sequence, read N- to C-terminus: 5'-nucleotidase SurE (250 aa).

A divalent metal cation is bound by residues Asp8, Asp9, Ser40, and Asn94.

The protein belongs to the SurE nucleotidase family. It depends on a divalent metal cation as a cofactor.

It is found in the cytoplasm. It carries out the reaction a ribonucleoside 5'-phosphate + H2O = a ribonucleoside + phosphate. Its function is as follows. Nucleotidase that shows phosphatase activity on nucleoside 5'-monophosphates. This Wolbachia sp. subsp. Drosophila simulans (strain wRi) protein is 5'-nucleotidase SurE.